Consider the following 163-residue polypeptide: Transcription antitermination protein NusB (163 aa).

Belongs to the NusB family.

Its function is as follows. Involved in transcription antitermination. Required for transcription of ribosomal RNA (rRNA) genes. Binds specifically to the boxA antiterminator sequence of the ribosomal RNA (rrn) operons. The chain is Transcription antitermination protein NusB from Chlorobium luteolum (strain DSM 273 / BCRC 81028 / 2530) (Pelodictyon luteolum).